The following is a 195-amino-acid chain: Cyclin-dependent kinase inhibitor 7 (195 aa).

Positions 1-11 (MSETKPKRDSE) are enriched in basic and acidic residues. 3 disordered regions span residues 1–50 (MSET…SVSD), 61–80 (EEED…SSET), and 117–154 (SSEN…TQAE). Low complexity-rich tracts occupy residues 37–50 (SSSS…SVSD) and 68–80 (SSSI…SSET). The residue at position 151 (Thr-151) is a Phosphothreonine; by KIN10.

Belongs to the CDI family. ICK/KRP subfamily. Specifically interacts with CDKA-1, but not with CDKB1-1. Interacts with CYCD4-1. Binds to FBL17. Post-translationally, ubiquitinated by SCF(FBL17). Ubiquitination leads to its subsequent degradation, thus controlling cell cycle progression. As to expression, expressed in flowers, in developing pollen, and at lower levels in roots and leaves.

Its subcellular location is the nucleus. The protein resides in the nucleoplasm. In terms of biological role, binds and inhibits CYCD2-1/CDKA-1 complex kinase activity. May target specifically CDKA-1. In Arabidopsis thaliana (Mouse-ear cress), this protein is Cyclin-dependent kinase inhibitor 7 (KRP7).